The chain runs to 126 residues: Small ribosomal subunit protein uS11 (126 aa).

It belongs to the universal ribosomal protein uS11 family. In terms of assembly, part of the 30S ribosomal subunit.

Functionally, located on the platform of the 30S subunit. This Methanosarcina acetivorans (strain ATCC 35395 / DSM 2834 / JCM 12185 / C2A) protein is Small ribosomal subunit protein uS11.